Consider the following 206-residue polypeptide: MIKKVQHALILNELTKLRDKNTTTSQFRMALNQITSLLFFEATKQLPLATVEVETPFAKTKGYKLKNDIVLVPIMRAGLGMIDAIVRYSDKIRVGHLGIYRQTQTTSVISYYKKMPENISDSHVIILDPMLATGTTLLTAIKSIKEDKPIKISVIAIVAAPEGINKVEKMHPHVDIFLAAIDEKLNDNRYIIPGLGDAGDRLFGTK.

5-phospho-alpha-D-ribose 1-diphosphate contacts are provided by residues arginine 76, arginine 101, and 128–136; that span reads DPMLATGTT. Uracil is bound by residues isoleucine 191 and 196-198; that span reads GDA. A 5-phospho-alpha-D-ribose 1-diphosphate-binding site is contributed by aspartate 197.

The protein belongs to the UPRTase family. Mg(2+) serves as cofactor.

It carries out the reaction UMP + diphosphate = 5-phospho-alpha-D-ribose 1-diphosphate + uracil. It functions in the pathway pyrimidine metabolism; UMP biosynthesis via salvage pathway; UMP from uracil: step 1/1. Its activity is regulated as follows. Allosterically activated by GTP. Functionally, catalyzes the conversion of uracil and 5-phospho-alpha-D-ribose 1-diphosphate (PRPP) to UMP and diphosphate. This is Uracil phosphoribosyltransferase from Mycoplasma genitalium (strain ATCC 33530 / DSM 19775 / NCTC 10195 / G37) (Mycoplasmoides genitalium).